The chain runs to 253 residues: Glucosamine-6-phosphate deaminase (253 aa).

The Proton acceptor; for enolization step role is filled by D65. Residue N133 is the For ring-opening step of the active site. H135 functions as the Proton acceptor; for ring-opening step in the catalytic mechanism. E140 functions as the For ring-opening step in the catalytic mechanism.

This sequence belongs to the glucosamine/galactosamine-6-phosphate isomerase family. NagB subfamily.

The catalysed reaction is alpha-D-glucosamine 6-phosphate + H2O = beta-D-fructose 6-phosphate + NH4(+). It participates in amino-sugar metabolism; N-acetylneuraminate degradation; D-fructose 6-phosphate from N-acetylneuraminate: step 5/5. Functionally, catalyzes the reversible isomerization-deamination of glucosamine 6-phosphate (GlcN6P) to form fructose 6-phosphate (Fru6P) and ammonium ion. The sequence is that of Glucosamine-6-phosphate deaminase from Corynebacterium glutamicum (strain R).